Reading from the N-terminus, the 394-residue chain is Envelope glycoprotein D (394 aa).

A signal peptide spans 1-25 (MGGTAARLGAVILFVVIVGLHGVRG). The interval 25–57 (GKYALADASLKMADPNRFRGKDLPVLDQLTDPP) is interaction with TNFRSF14. At 26-339 (KYALADASLK…PYHPPATPNN (314 aa)) the chain is on the virion surface side. His-64 lines the Zn(2+) pocket. 3 cysteine pairs are disulfide-bonded: Cys-91–Cys-214, Cys-131–Cys-227, and Cys-143–Cys-152. Asn-119 and Asn-146 each carry an N-linked (GlcNAc...) asparagine; by host glycan. Asp-240 provides a ligand contact to Zn(2+). The tract at residues 261 to 305 (LKIAGWHGPKAPYTSTLLPPELSETPNATQPELAPEDPEDSALLE) is profusion. Residues 275-301 (STLLPPELSETPNATQPELAPEDPEDS) are disordered. Asn-287 carries an N-linked (GlcNAc...) asparagine; by host glycan. The helical transmembrane segment at 340 to 364 (MGLIAGAVGGSLLAALVICGIVYWM) threads the bilayer. The Intravirion portion of the chain corresponds to 365 to 394 (HRRTRKAPKRIRLPHIREDDQPSSHQPLFY).

The protein belongs to the herpesviridae glycoprotein D family. In terms of assembly, homodimer. Interacts with host receptor TNFRSF14. Interacts with host receptor NECTIN1. Interacts (via profusion domain) with gB; this interaction occurs in the absence of gH/gL. Interacts (via profusion domain) with gH/gL heterodimer; this interaction occurs in the absence of gB. Associates with the gB-gH/gL-gD complex. Interacts (via C-terminus) with UL11 tegument protein. Interacts with host RSAD2.

The protein resides in the virion membrane. It localises to the host Golgi apparatus. Its function is as follows. Envelope glycoprotein that binds to the host cell entry receptors NECTIN1, TNFRSF14/HVEM and 3-O-sulfated heparan sulfate, promoting the virus entry into host cells. May trigger fusion with host membrane, by recruiting the fusion machinery composed of gB and gH/gL. The sequence is that of Envelope glycoprotein D (gD) from Human herpesvirus 1 (strain Patton) (HHV-1).